Here is a 249-residue protein sequence, read N- to C-terminus: Phosphomannomutase (249 aa).

D15 serves as the catalytic Nucleophile. 2 residues coordinate Mg(2+): D15 and D17. D17 serves as the catalytic Proton donor/acceptor. Alpha-D-mannose 1-phosphate contacts are provided by R24, R126, R137, R144, S182, and D184. Residues D210, F222, and T227 each coordinate Mg(2+).

This sequence belongs to the eukaryotic PMM family. Homodimer. The cofactor is Mg(2+). As to expression, expressed in roots, leaves, flag leaves and immature spikes.

It is found in the cytoplasm. It carries out the reaction alpha-D-mannose 1-phosphate = D-mannose 6-phosphate. It participates in nucleotide-sugar biosynthesis; GDP-alpha-D-mannose biosynthesis; alpha-D-mannose 1-phosphate from D-fructose 6-phosphate: step 2/2. Functionally, catalyzes the interconversion of mannose-6-phosphate to mannose-1-phosphate, the precursor for the synthesis of GDP-mannose. GDP-mannose is an essential sugar nucleotide for the synthesis of D-mannose-containing cell wall polysaccharides (galactomannans and glucomannans), glycolipids, glycoproteins and the antioxidant L-ascorbate. Can complement the yeast temperature-sensitive mutant sec53-6. The polypeptide is Phosphomannomutase (Triticum aestivum (Wheat)).